We begin with the raw amino-acid sequence, 74 residues long: U3-agatoxin-Ao1h (74 aa).

The N-terminal stretch at 1–20 (MRAIISLLLISTMVFGVIEA) is a signal peptide. The propeptide occupies 21–34 (VSVQKSLKIFEGER). Intrachain disulfides connect cysteine 37/cysteine 53, cysteine 44/cysteine 58, cysteine 52/cysteine 68, and cysteine 60/cysteine 66. Position 72 is an asparagine amide (asparagine 72).

Belongs to the neurotoxin 07 (Beta/delta-agtx) family. 03 (aga-4) subfamily. Aga sub-subfamily. In terms of tissue distribution, expressed by the venom gland.

It localises to the secreted. Insecticidal neurotoxin that induces an irreversible spastic paralysis when injected into insects. Modifies presynaptic voltage-gated sodium channels (Nav), causing them to open at the normal resting potential of the nerve. This leads to spontaneous release of neurotransmitter and repetitive action potentials in motor neurons. The polypeptide is U3-agatoxin-Ao1h (Agelena orientalis (Funnel-web spider)).